A 545-amino-acid polypeptide reads, in one-letter code: Chaperonin GroEL (545 aa).

Residues 30–33 (TMGP), Lys51, 87–91 (DGTTT), Gly415, and Asp494 each bind ATP.

Belongs to the chaperonin (HSP60) family. As to quaternary structure, forms a cylinder of 14 subunits composed of two heptameric rings stacked back-to-back. Interacts with the co-chaperonin GroES.

Its subcellular location is the cytoplasm. It carries out the reaction ATP + H2O + a folded polypeptide = ADP + phosphate + an unfolded polypeptide.. Together with its co-chaperonin GroES, plays an essential role in assisting protein folding. The GroEL-GroES system forms a nano-cage that allows encapsulation of the non-native substrate proteins and provides a physical environment optimized to promote and accelerate protein folding. The protein is Chaperonin GroEL of Helicobacter hepaticus (strain ATCC 51449 / 3B1).